Here is a 282-residue protein sequence, read N- to C-terminus: Pantothenate synthetase (282 aa).

30 to 37 (MGYLHEGH) is an ATP binding site. The active-site Proton donor is the H37. Residue Q61 participates in (R)-pantoate binding. Q61 contributes to the beta-alanine binding site. 147–150 (GMKD) serves as a coordination point for ATP. Q153 contacts (R)-pantoate. Residues V176 and 184–187 (KSSR) contribute to the ATP site.

The protein belongs to the pantothenate synthetase family. Homodimer.

It localises to the cytoplasm. It carries out the reaction (R)-pantoate + beta-alanine + ATP = (R)-pantothenate + AMP + diphosphate + H(+). The protein operates within cofactor biosynthesis; (R)-pantothenate biosynthesis; (R)-pantothenate from (R)-pantoate and beta-alanine: step 1/1. Its function is as follows. Catalyzes the condensation of pantoate with beta-alanine in an ATP-dependent reaction via a pantoyl-adenylate intermediate. This chain is Pantothenate synthetase, found in Bacillus thuringiensis subsp. konkukian (strain 97-27).